The primary structure comprises 288 residues: Phosphatidylserine decarboxylase proenzyme (288 aa).

Active-site charge relay system; for autoendoproteolytic cleavage activity residues include Asp-95, His-152, and Ser-255. Ser-255 functions as the Schiff-base intermediate with substrate; via pyruvic acid; for decarboxylase activity in the catalytic mechanism. Ser-255 bears the Pyruvic acid (Ser); by autocatalysis mark.

The protein belongs to the phosphatidylserine decarboxylase family. PSD-B subfamily. Prokaryotic type I sub-subfamily. As to quaternary structure, heterodimer of a large membrane-associated beta subunit and a small pyruvoyl-containing alpha subunit. It depends on pyruvate as a cofactor. Is synthesized initially as an inactive proenzyme. Formation of the active enzyme involves a self-maturation process in which the active site pyruvoyl group is generated from an internal serine residue via an autocatalytic post-translational modification. Two non-identical subunits are generated from the proenzyme in this reaction, and the pyruvate is formed at the N-terminus of the alpha chain, which is derived from the carboxyl end of the proenzyme. The autoendoproteolytic cleavage occurs by a canonical serine protease mechanism, in which the side chain hydroxyl group of the serine supplies its oxygen atom to form the C-terminus of the beta chain, while the remainder of the serine residue undergoes an oxidative deamination to produce ammonia and the pyruvoyl prosthetic group on the alpha chain. During this reaction, the Ser that is part of the protease active site of the proenzyme becomes the pyruvoyl prosthetic group, which constitutes an essential element of the active site of the mature decarboxylase.

The protein localises to the cell membrane. The catalysed reaction is a 1,2-diacyl-sn-glycero-3-phospho-L-serine + H(+) = a 1,2-diacyl-sn-glycero-3-phosphoethanolamine + CO2. The protein operates within phospholipid metabolism; phosphatidylethanolamine biosynthesis; phosphatidylethanolamine from CDP-diacylglycerol: step 2/2. Catalyzes the formation of phosphatidylethanolamine (PtdEtn) from phosphatidylserine (PtdSer). The chain is Phosphatidylserine decarboxylase proenzyme from Methylococcus capsulatus (strain ATCC 33009 / NCIMB 11132 / Bath).